We begin with the raw amino-acid sequence, 249 residues long: MTRKWIKKLQSYIGEFFASFIFGFAVYTSIIGSAQTGQSAGPIIVALTIALSGVAIIYSFCDITVAHFNPAITFSAMCFRRLPFFGGIFIIIFQVAGFIIAGLASVAVLPGKYKNKLEIARPKRVADNVSRGRIFGTEFFLTAILVYVAFAVGVNPYTPPKDEHGDQLDPDEGLTEGRKITAPLAIGFTLGFCALLGIASSGGAFNPGIVLSPMILTGTWDFWWVYLLGQFSGGLLGGGLQRFLLYKIF.

Residues Met1–Ser11 are Cytoplasmic-facing. A helical membrane pass occupies residues Tyr12 to Gly32. The Extracellular portion of the chain corresponds to Ser33 to Ser39. Residues Ala40–Phe60 traverse the membrane as a helical segment. The Cytoplasmic segment spans residues Cys61–Pro83. An NPA motif is present at residues Asn69 to Ala71. Residues Phe84–Ala104 traverse the membrane as a helical segment. The Extracellular portion of the chain corresponds to Ser105–Arg133. Residues Ile134–Val154 form a helical membrane-spanning segment. The Cytoplasmic segment spans residues Asn155–Lys179. Residues Ile180 to Ser200 form a helical membrane-spanning segment. The Extracellular segment spans residues Ser201 to Trp223. An NPG motif is present at residues Asn206–Gly208. Residues Trp224–Tyr246 form a helical membrane-spanning segment. At Lys247–Phe249 the chain is on the cytoplasmic side.

Belongs to the MIP/aquaporin (TC 1.A.8) family.

The protein localises to the cell membrane. In terms of biological role, water channel required to facilitate the transport of water across membranes. Involved in osmotolerance. This Vairimorpha ceranae (strain BRL01) (Microsporidian parasite) protein is Aquaporin (AQP).